We begin with the raw amino-acid sequence, 291 residues long: Acetyl-coenzyme A carboxylase carboxyl transferase subunit beta (291 aa).

One can recognise a CoA carboxyltransferase N-terminal domain in the interval 29 to 291 (LWSKCPECGE…MHQQPAAVSA (263 aa)). Residues Cys33, Cys36, Cys52, and Cys55 each contribute to the Zn(2+) site. A C4-type zinc finger spans residues 33-55 (CPECGEVVYRKDLIANASVCASC).

This sequence belongs to the AccD/PCCB family. Acetyl-CoA carboxylase is a heterohexamer composed of biotin carboxyl carrier protein (AccB), biotin carboxylase (AccC) and two subunits each of ACCase subunit alpha (AccA) and ACCase subunit beta (AccD). Zn(2+) serves as cofactor.

Its subcellular location is the cytoplasm. It catalyses the reaction N(6)-carboxybiotinyl-L-lysyl-[protein] + acetyl-CoA = N(6)-biotinyl-L-lysyl-[protein] + malonyl-CoA. It functions in the pathway lipid metabolism; malonyl-CoA biosynthesis; malonyl-CoA from acetyl-CoA: step 1/1. Functionally, component of the acetyl coenzyme A carboxylase (ACC) complex. Biotin carboxylase (BC) catalyzes the carboxylation of biotin on its carrier protein (BCCP) and then the CO(2) group is transferred by the transcarboxylase to acetyl-CoA to form malonyl-CoA. In Synechococcus sp. (strain RCC307), this protein is Acetyl-coenzyme A carboxylase carboxyl transferase subunit beta.